A 377-amino-acid polypeptide reads, in one-letter code: Probable glucokinase 2 (377 aa).

27 to 32 lines the ATP pocket; it reads CDVGGS.

This sequence belongs to the bacterial glucokinase family.

It catalyses the reaction D-glucose + ATP = D-glucose 6-phosphate + ADP + H(+). The protein is Probable glucokinase 2 (GK2) of Trichomonas vaginalis.